A 407-amino-acid chain; its full sequence is Chorismate synthase (407 aa).

NADP(+) is bound by residues arginine 40 and arginine 46. Residues 138-140 and 259-260 each bind FMN; these read RAS and QA. Residues 275 to 284 are compositionally biased toward basic and acidic residues; the sequence is RRGSRAHDEM. The tract at residues 275–308 is disordered; that stretch reads RRGSRAHDEMYPGTDGVVRSTNRAGGLEGGMTNG. FMN contacts are provided by residues glycine 303, 318–322, and arginine 344; that span reads KPIST.

This sequence belongs to the chorismate synthase family. Homotetramer. Requires FMNH2 as cofactor.

It carries out the reaction 5-O-(1-carboxyvinyl)-3-phosphoshikimate = chorismate + phosphate. Its pathway is metabolic intermediate biosynthesis; chorismate biosynthesis; chorismate from D-erythrose 4-phosphate and phosphoenolpyruvate: step 7/7. In terms of biological role, catalyzes the anti-1,4-elimination of the C-3 phosphate and the C-6 proR hydrogen from 5-enolpyruvylshikimate-3-phosphate (EPSP) to yield chorismate, which is the branch point compound that serves as the starting substrate for the three terminal pathways of aromatic amino acid biosynthesis. This reaction introduces a second double bond into the aromatic ring system. In Mycobacterium marinum (strain ATCC BAA-535 / M), this protein is Chorismate synthase.